The following is a 185-amino-acid chain: Ribosome-recycling factor (185 aa).

This sequence belongs to the RRF family.

Its subcellular location is the cytoplasm. In terms of biological role, responsible for the release of ribosomes from messenger RNA at the termination of protein biosynthesis. May increase the efficiency of translation by recycling ribosomes from one round of translation to another. The sequence is that of Ribosome-recycling factor from Streptococcus pyogenes serotype M18 (strain MGAS8232).